The sequence spans 345 residues: MDEQRSKALSAALSQIDKQFGKGAVMRLGDHNAIKDIEVYSTGSLGLDLALGVGGLPRGRVVEIYGPESSGKTTLTLHAIASCQAAGGTAAFIDAEHALDPGYAHKLGVDLENLLISQPDTGEQALEIADMLVRSGAVDLIVIDSVAALTPKAEIEGDMGDSHVGLQARLMSQALRKLTANISRTNTLVIFINQIRMKIGVMYGSPETTTGGNALKFYASVRLDIRRIGAIKKSDEVVGNDTRVKVVKNKVAPPFREAEFAIYYGEGISRLSELVDLGVKFDIVEKSGAWYSYQGERIGQGKDNARQYLKEHPELAANIEQRIRAAAAGHPLAFAEEVAEPAAVG.

ATP is bound at residue 66 to 73 (GPESSGKT).

It belongs to the RecA family.

It is found in the cytoplasm. Its function is as follows. Can catalyze the hydrolysis of ATP in the presence of single-stranded DNA, the ATP-dependent uptake of single-stranded DNA by duplex DNA, and the ATP-dependent hybridization of homologous single-stranded DNAs. It interacts with LexA causing its activation and leading to its autocatalytic cleavage. This is Protein RecA from Acidithiobacillus ferrooxidans (strain ATCC 23270 / DSM 14882 / CIP 104768 / NCIMB 8455) (Ferrobacillus ferrooxidans (strain ATCC 23270)).